The chain runs to 376 residues: Sulfate/thiosulfate import ATP-binding protein CysA 1 (376 aa).

Residues 3-237 (IRLTNISKKF…PNSRFVFDFL (235 aa)) enclose the ABC transporter domain. Residue 35–42 (GPSGSGKT) participates in ATP binding.

The protein belongs to the ABC transporter superfamily. Sulfate/tungstate importer (TC 3.A.1.6) family. In terms of assembly, the complex is composed of two ATP-binding proteins (CysA), two transmembrane proteins (CysT and CysW) and a solute-binding protein (CysP).

The protein localises to the cell inner membrane. It catalyses the reaction sulfate(out) + ATP + H2O = sulfate(in) + ADP + phosphate + H(+). It carries out the reaction thiosulfate(out) + ATP + H2O = thiosulfate(in) + ADP + phosphate + H(+). Part of the ABC transporter complex CysAWTP involved in sulfate/thiosulfate import. Responsible for energy coupling to the transport system. This Shewanella oneidensis (strain ATCC 700550 / JCM 31522 / CIP 106686 / LMG 19005 / NCIMB 14063 / MR-1) protein is Sulfate/thiosulfate import ATP-binding protein CysA 1.